We begin with the raw amino-acid sequence, 332 residues long: GTP 3',8-cyclase (332 aa).

The 215-residue stretch at 7–221 (SYDRLHDYVR…FDTCKDNGLA (215 aa)) folds into the Radical SAM core domain. Arginine 16 lines the GTP pocket. Cysteine 23 and cysteine 27 together coordinate [4Fe-4S] cluster. Tyrosine 29 is a binding site for S-adenosyl-L-methionine. Cysteine 30 is a binding site for [4Fe-4S] cluster. A GTP-binding site is contributed by arginine 66. Residue glycine 70 participates in S-adenosyl-L-methionine binding. Threonine 97 lines the GTP pocket. Serine 121 contributes to the S-adenosyl-L-methionine binding site. Lysine 158 is a binding site for GTP. Residue methionine 192 participates in S-adenosyl-L-methionine binding. [4Fe-4S] cluster contacts are provided by cysteine 256 and cysteine 259. 261 to 263 (RLR) provides a ligand contact to GTP. Cysteine 273 contributes to the [4Fe-4S] cluster binding site.

The protein belongs to the radical SAM superfamily. MoaA family. As to quaternary structure, monomer and homodimer. It depends on [4Fe-4S] cluster as a cofactor.

It carries out the reaction GTP + AH2 + S-adenosyl-L-methionine = (8S)-3',8-cyclo-7,8-dihydroguanosine 5'-triphosphate + 5'-deoxyadenosine + L-methionine + A + H(+). It functions in the pathway cofactor biosynthesis; molybdopterin biosynthesis. Catalyzes the cyclization of GTP to (8S)-3',8-cyclo-7,8-dihydroguanosine 5'-triphosphate. This is GTP 3',8-cyclase from Lactiplantibacillus plantarum (strain ATCC BAA-793 / NCIMB 8826 / WCFS1) (Lactobacillus plantarum).